The following is a 218-amino-acid chain: Small ribosomal subunit protein uS3c (218 aa).

The 72-residue stretch at 47-118 folds into the KH type-2 domain; that stretch reads VQKHMRISSG…RLNIAIARVA (72 aa).

This sequence belongs to the universal ribosomal protein uS3 family. As to quaternary structure, part of the 30S ribosomal subunit.

The protein resides in the plastid. The protein localises to the chloroplast. The protein is Small ribosomal subunit protein uS3c (rps3) of Nymphaea alba (White water-lily).